A 2367-amino-acid chain; its full sequence is Probable G-protein coupled receptor 179 (2367 aa).

Positions M1 to A25 are cleaved as a signal peptide. Over L26 to R381 the chain is Extracellular. Positions Y62–W245 are cache-like region. An N-linked (GlcNAc...) asparagine glycan is attached at N75. A disulfide bond links C76 and C236. An N-linked (GlcNAc...) asparagine glycan is attached at N298. A helical membrane pass occupies residues A382–S402. Residues Y403–G415 are Cytoplasmic-facing. A helical membrane pass occupies residues V416–L436. Topologically, residues Y437 to R444 are extracellular. Residues C445 to L465 form a helical membrane-spanning segment. C445 and C537 are oxidised to a cystine. Residues K466–R493 lie on the Cytoplasmic side of the membrane. The helical transmembrane segment at L494 to E514 threads the bilayer. Over R515 to D543 the chain is Extracellular. The chain crosses the membrane as a helical span at residues Y544–T564. Over R565–R575 the chain is Cytoplasmic. A helical membrane pass occupies residues Y576–A594. Topologically, residues R595–T607 are extracellular. The chain crosses the membrane as a helical span at residues L608–I628. Residues P629–E2367 lie on the Cytoplasmic side of the membrane. Disordered regions lie at residues A731–A818, R869–P932, K1039–S1083, R1098–T1198, E1247–E1431, P1537–A1557, D1577–Q1672, A1723–E1757, S1823–L1852, A1886–E2108, W2133–G2212, and G2308–E2367. The segment covering S738–L759 has biased composition (low complexity). A compositionally biased stretch (basic and acidic residues) spans S773 to D782. A compositionally biased stretch (basic and acidic residues) spans K1039 to K1067. Positions L1153–M1164 are enriched in polar residues. Basic and acidic residues-rich tracts occupy residues E1171–R1181, R1277–P1299, G1341–G1362, and E1390–Q1407. Residues E1615–E1639 are compositionally biased toward basic and acidic residues. 6 stretches are compositionally biased toward basic and acidic residues: residues A1840–R1851, A1903–P1920, S1970–Q1979, V2023–P2054, K2061–Q2070, and T2165–E2180. The segment covering P2326–L2340 has biased composition (low complexity).

The protein belongs to the G-protein coupled receptor 3 family. Homodimer. Associates with the R7 group RGS-GNB5 complexes, composed of an R7 group RGS subunit (RGS6, RGS7, RGS9 or RGS11) and GNB5, promoting their localization to the cell membrane and regulating the GTPase activator activity of R7 RGS proteins. Interacts with TRPM1. Interacts with GRM6. Interacts with EGFLAM; transsynaptic interaction is required for synaptic organization of photoreceptor cells. In terms of tissue distribution, expressed in the retina.

The protein resides in the cell membrane. It localises to the postsynaptic cell membrane. Its subcellular location is the cell projection. It is found in the dendrite. In terms of biological role, orphan receptor involved in vision. Required for signal transduction through retinal depolarizing bipolar cells. Acts as an atypical G-protein coupled receptor that recruits and regulates the R7 group RGS-GNB5 complexes instead of activating G proteins: promotes the GTPase activator activity of R7 RGS proteins, increasing the GTPase activity of G protein alpha subunits, thereby driving them into their inactive GDP-bound form. Associates with components of metabotropic signaling cascade in retina ON-bipolar neurons, such as TRPM1 and GRM6: may control the ability of the GRM6 cascade to gate TRPM1. This is Probable G-protein coupled receptor 179 from Homo sapiens (Human).